The sequence spans 446 residues: Tryptophan synthase beta chain 2 (446 aa).

An N6-(pyridoxal phosphate)lysine modification is found at K110.

The protein belongs to the TrpB family. In terms of assembly, tetramer of two alpha and two beta chains. Pyridoxal 5'-phosphate serves as cofactor.

It carries out the reaction (1S,2R)-1-C-(indol-3-yl)glycerol 3-phosphate + L-serine = D-glyceraldehyde 3-phosphate + L-tryptophan + H2O. Its pathway is amino-acid biosynthesis; L-tryptophan biosynthesis; L-tryptophan from chorismate: step 5/5. The beta subunit is responsible for the synthesis of L-tryptophan from indole and L-serine. The polypeptide is Tryptophan synthase beta chain 2 (trpB2) (Pyrococcus furiosus (strain ATCC 43587 / DSM 3638 / JCM 8422 / Vc1)).